A 220-amino-acid chain; its full sequence is Iron-sulfur cluster repair protein YtfE (220 aa).

The protein belongs to the RIC family. YtfE subfamily. As to quaternary structure, homodimer.

The protein localises to the cytoplasm. Its function is as follows. Di-iron-containing protein involved in the repair of iron-sulfur clusters damaged by oxidative and nitrosative stress conditions. The chain is Iron-sulfur cluster repair protein YtfE from Shigella boydii serotype 18 (strain CDC 3083-94 / BS512).